The primary structure comprises 431 residues: Glutamate-1-semialdehyde 2,1-aminomutase (431 aa).

Lysine 269 is modified (N6-(pyridoxal phosphate)lysine).

This sequence belongs to the class-III pyridoxal-phosphate-dependent aminotransferase family. HemL subfamily. In terms of assembly, homodimer. Pyridoxal 5'-phosphate is required as a cofactor.

It localises to the cytoplasm. It catalyses the reaction (S)-4-amino-5-oxopentanoate = 5-aminolevulinate. The protein operates within porphyrin-containing compound metabolism; protoporphyrin-IX biosynthesis; 5-aminolevulinate from L-glutamyl-tRNA(Glu): step 2/2. It participates in porphyrin-containing compound metabolism; chlorophyll biosynthesis. The protein is Glutamate-1-semialdehyde 2,1-aminomutase of Chlorobaculum tepidum (strain ATCC 49652 / DSM 12025 / NBRC 103806 / TLS) (Chlorobium tepidum).